Reading from the N-terminus, the 355-residue chain is Protein RecA (355 aa).

Residue 67–74 (GPESSGKT) coordinates ATP.

It belongs to the RecA family.

The protein localises to the cytoplasm. In terms of biological role, can catalyze the hydrolysis of ATP in the presence of single-stranded DNA, the ATP-dependent uptake of single-stranded DNA by duplex DNA, and the ATP-dependent hybridization of homologous single-stranded DNAs. It interacts with LexA causing its activation and leading to its autocatalytic cleavage. This Histophilus somni (strain 2336) (Haemophilus somnus) protein is Protein RecA.